Reading from the N-terminus, the 499-residue chain is Glycerol kinase (499 aa).

Threonine 13 is a binding site for ADP. ATP contacts are provided by threonine 13, threonine 14, and serine 15. Threonine 13 contributes to the sn-glycerol 3-phosphate binding site. Arginine 17 serves as a coordination point for ADP. Positions 83, 84, 135, and 245 each coordinate sn-glycerol 3-phosphate. The glycerol site is built by arginine 83, glutamate 84, tyrosine 135, aspartate 245, and glutamine 246. 2 residues coordinate ADP: threonine 267 and glycine 310. ATP is bound by residues threonine 267, glycine 310, glutamine 314, and glycine 411. ADP contacts are provided by glycine 411 and asparagine 415.

Belongs to the FGGY kinase family.

It catalyses the reaction glycerol + ATP = sn-glycerol 3-phosphate + ADP + H(+). It participates in polyol metabolism; glycerol degradation via glycerol kinase pathway; sn-glycerol 3-phosphate from glycerol: step 1/1. Its activity is regulated as follows. Inhibited by fructose 1,6-bisphosphate (FBP). Functionally, key enzyme in the regulation of glycerol uptake and metabolism. Catalyzes the phosphorylation of glycerol to yield sn-glycerol 3-phosphate. This chain is Glycerol kinase, found in Xanthomonas euvesicatoria pv. vesicatoria (strain 85-10) (Xanthomonas campestris pv. vesicatoria).